Here is a 190-residue protein sequence, read N- to C-terminus: Peptidyl-tRNA hydrolase (190 aa).

A tRNA-binding site is contributed by Y18. The active-site Proton acceptor is H23. Residues F69, N71, and N117 each coordinate tRNA.

This sequence belongs to the PTH family. In terms of assembly, monomer.

Its subcellular location is the cytoplasm. The catalysed reaction is an N-acyl-L-alpha-aminoacyl-tRNA + H2O = an N-acyl-L-amino acid + a tRNA + H(+). In terms of biological role, hydrolyzes ribosome-free peptidyl-tRNAs (with 1 or more amino acids incorporated), which drop off the ribosome during protein synthesis, or as a result of ribosome stalling. Catalyzes the release of premature peptidyl moieties from peptidyl-tRNA molecules trapped in stalled 50S ribosomal subunits, and thus maintains levels of free tRNAs and 50S ribosomes. The chain is Peptidyl-tRNA hydrolase from Rhodococcus opacus (strain B4).